The sequence spans 671 residues: cGMP-dependent protein kinase 1 (671 aa).

The residue at position 2 (Ser2) is an N-acetylserine. Residues Ser2–Thr59 are a coiled coil. The tract at residues Ser2–Asp102 is required for dimerization. The interval Ala9–Gln44 is leucine-zipper. Positions Pro50–His75 are autoinhibitory domain. At Thr59 the chain carries Phosphothreonine; by autocatalysis. The segment at Phe103–Pro220 is cGMP-binding, high affinity. Residues Gly167 to Ala170 and Arg177 to Thr178 each bind 3',5'-cyclic AMP. Residues Gly167 to Ala170, Arg177 to Thr178, Arg282, Gly291 to Ala294, Arg301 to Thr302, and Tyr336 contribute to the 3',5'-cyclic GMP site. Positions Thr221 to Ala341 are cGMP-binding, low affinity. 3',5'-cyclic AMP-binding positions include Gly291 to Ala294, Arg301 to Thr302, and Tyr336. The Protein kinase domain maps to Phe360–Phe619. Residues Leu366 to Val374 and Lys390 each bind ATP. The active-site Proton acceptor is the Asp484. Thr515 is modified (phosphothreonine). The AGC-kinase C-terminal domain occupies Glu620 to Phe671. A disordered region spans residues Pro635–Phe671. The segment covering Phe652–Pro661 has biased composition (acidic residues).

Belongs to the protein kinase superfamily. AGC Ser/Thr protein kinase family. cGMP subfamily. Isoform alpha: parallel homodimer or heterodimer and also heterotetramer. Interacts directly with PPP1R12A. Non-covalent dimer of dimer of PRKG1-PRKG1 and PPP1R12A-PPP1R12A. This interaction targets PRKG1 to stress fibers to mediate smooth muscle cell relaxation and vasodilation in responses to rises in cGMP. Isoform beta: antiparallel homodimer. Part of cGMP kinase signaling complex at least composed of ACTA2/alpha-actin, CNN1/calponin H1, PLN/phospholamban, PRKG1 and ITPR1. Interacts with IRAG1. Forms a stable complex with ITPR1, IRAG1, and isoform beta of PRKG1. Interacts with TRPC7 (via ankyrin repeat domain). Isoform alpha interacts with RGS2. Interacts with GTF2I. Autophosphorylation increases kinase activity. Post-translationally, 65 kDa monomer is produced by proteolytic cleavage. As to expression, primarily expressed in lung and placenta.

It localises to the cytoplasm. The enzyme catalyses L-seryl-[protein] + ATP = O-phospho-L-seryl-[protein] + ADP + H(+). It carries out the reaction L-threonyl-[protein] + ATP = O-phospho-L-threonyl-[protein] + ADP + H(+). In the absence of cGMP, PRKG1 activity is suppressed by autoinhibitory contacts. In terms of biological role, serine/threonine protein kinase that acts as a key mediator of the nitric oxide (NO)/cGMP signaling pathway. GMP binding activates PRKG1, which phosphorylates serines and threonines on many cellular proteins. Numerous protein targets for PRKG1 phosphorylation are implicated in modulating cellular calcium, but the contribution of each of these targets may vary substantially among cell types. Proteins that are phosphorylated by PRKG1 regulate platelet activation and adhesion, smooth muscle contraction, cardiac function, gene expression, feedback of the NO-signaling pathway, and other processes involved in several aspects of the CNS like axon guidance, hippocampal and cerebellar learning, circadian rhythm and nociception. Smooth muscle relaxation is mediated through lowering of intracellular free calcium, by desensitization of contractile proteins to calcium, and by decrease in the contractile state of smooth muscle or in platelet activation. Regulates intracellular calcium levels via several pathways: phosphorylates IRAG1 and inhibits IP3-induced Ca(2+) release from intracellular stores, phosphorylation of KCNMA1 (BKCa) channels decreases intracellular Ca(2+) levels, which leads to increased opening of this channel. PRKG1 phosphorylates the canonical transient receptor potential channel (TRPC) family which inactivates the associated inward calcium current. Another mode of action of NO/cGMP/PKGI signaling involves PKGI-mediated inactivation of the Ras homolog gene family member A (RhoA). Phosphorylation of RHOA by PRKG1 blocks the action of this protein in myriad processes: regulation of RHOA translocation; decreasing contraction; controlling vesicle trafficking, reduction of myosin light chain phosphorylation resulting in vasorelaxation. Activation of PRKG1 by NO signaling also alters gene expression in a number of tissues. In smooth muscle cells, increased cGMP and PRKG1 activity influence expression of smooth muscle-specific contractile proteins, levels of proteins in the NO/cGMP signaling pathway, down-regulation of the matrix proteins osteopontin and thrombospondin-1 to limit smooth muscle cell migration and phenotype. Regulates vasodilator-stimulated phosphoprotein (VASP) functions in platelets and smooth muscle. The chain is cGMP-dependent protein kinase 1 (PRKG1) from Homo sapiens (Human).